A 179-amino-acid chain; its full sequence is Large ribosomal subunit protein uL5 (179 aa).

The protein belongs to the universal ribosomal protein uL5 family. Part of the 50S ribosomal subunit; part of the 5S rRNA/L5/L18/L25 subcomplex. Contacts the 5S rRNA and the P site tRNA. Forms a bridge to the 30S subunit in the 70S ribosome.

In terms of biological role, this is one of the proteins that bind and probably mediate the attachment of the 5S RNA into the large ribosomal subunit, where it forms part of the central protuberance. In the 70S ribosome it contacts protein S13 of the 30S subunit (bridge B1b), connecting the 2 subunits; this bridge is implicated in subunit movement. Contacts the P site tRNA; the 5S rRNA and some of its associated proteins might help stabilize positioning of ribosome-bound tRNAs. This is Large ribosomal subunit protein uL5 from Enterococcus faecalis (strain ATCC 700802 / V583).